A 568-amino-acid chain; its full sequence is Proline--tRNA ligase (568 aa).

The protein belongs to the class-II aminoacyl-tRNA synthetase family. ProS type 1 subfamily. As to quaternary structure, homodimer.

Its subcellular location is the cytoplasm. The enzyme catalyses tRNA(Pro) + L-proline + ATP = L-prolyl-tRNA(Pro) + AMP + diphosphate. Its function is as follows. Catalyzes the attachment of proline to tRNA(Pro) in a two-step reaction: proline is first activated by ATP to form Pro-AMP and then transferred to the acceptor end of tRNA(Pro). As ProRS can inadvertently accommodate and process non-cognate amino acids such as alanine and cysteine, to avoid such errors it has two additional distinct editing activities against alanine. One activity is designated as 'pretransfer' editing and involves the tRNA(Pro)-independent hydrolysis of activated Ala-AMP. The other activity is designated 'posttransfer' editing and involves deacylation of mischarged Ala-tRNA(Pro). The misacylated Cys-tRNA(Pro) is not edited by ProRS. In Nitrosomonas eutropha (strain DSM 101675 / C91 / Nm57), this protein is Proline--tRNA ligase.